The primary structure comprises 422 residues: Protein UmuC (422 aa).

The region spanning 2–188 (FALCDVNAFY…LPVDDVWGIG (187 aa)) is the UmuC domain.

This sequence belongs to the DNA polymerase type-Y family.

In terms of biological role, involved in UV protection and mutation. Poorly processive, error-prone DNA polymerase involved in translesion repair. Essential for induced (or SOS) mutagenesis. Able to replicate DNA across DNA lesions (thymine photodimers and abasic sites, translesion synthesis) in the presence of activated RecA; efficiency is maximal in the presence of the beta sliding-clamp and clamp-loading complex of DNA polymerase III plus single-stranded binding protein (SSB). RecA and to a lesser extent the beta clamp-complex may target Pol V to replication complexes stalled at DNA template lesions. The protein is Protein UmuC (umuC) of Escherichia coli (strain K12).